Reading from the N-terminus, the 431-residue chain is Xaa-Arg dipeptidase (431 aa).

It belongs to the peptidase M20A family.

It catalyses the reaction beta-alanyl-L-lysine + H2O = beta-alanine + L-lysine. It carries out the reaction beta-alanyl-L-arginine + H2O = beta-alanine + L-arginine. The enzyme catalyses beta-alanyl-L-ornithine + H2O = beta-alanine + L-ornithine. The catalysed reaction is N(2)-(4-aminobutanoyl)-L-lysine + H2O = 4-aminobutanoate + L-lysine. It catalyses the reaction N(2)-(4-aminobutanoyl)-L-arginine + H2O = 4-aminobutanoate + L-arginine. It carries out the reaction N(2)-(4-aminobutanoyl)-L-ornithine + H2O = 4-aminobutanoate + L-ornithine. In terms of biological role, catalyzes the peptide bond hydrolysis in dipeptides having basic amino acids lysine, ornithine or arginine at C-terminus. Postulated to function in a metabolite repair mechanism by eliminating alternate dipeptide by-products formed during carnosine synthesis. In Mus musculus (Mouse), this protein is Xaa-Arg dipeptidase.